The sequence spans 299 residues: 4-diphosphocytidyl-2-C-methyl-D-erythritol kinase (299 aa).

The active site involves K20. Residue 106-116 (PMGGGLGGGSS) participates in ATP binding. The active site involves D148.

The protein belongs to the GHMP kinase family. IspE subfamily. Homodimer.

It catalyses the reaction 4-CDP-2-C-methyl-D-erythritol + ATP = 4-CDP-2-C-methyl-D-erythritol 2-phosphate + ADP + H(+). It functions in the pathway isoprenoid biosynthesis; isopentenyl diphosphate biosynthesis via DXP pathway; isopentenyl diphosphate from 1-deoxy-D-xylulose 5-phosphate: step 3/6. Functionally, catalyzes the phosphorylation of the position 2 hydroxy group of 4-diphosphocytidyl-2C-methyl-D-erythritol. The chain is 4-diphosphocytidyl-2-C-methyl-D-erythritol kinase from Yersinia pseudotuberculosis serotype O:1b (strain IP 31758).